A 253-amino-acid chain; its full sequence is Acetylglutamate kinase (253 aa).

Substrate contacts are provided by residues 37-38, R59, and N149; that span reads GG.

This sequence belongs to the acetylglutamate kinase family. ArgB subfamily.

Its subcellular location is the cytoplasm. The enzyme catalyses N-acetyl-L-glutamate + ATP = N-acetyl-L-glutamyl 5-phosphate + ADP. It participates in amino-acid biosynthesis; L-arginine biosynthesis; N(2)-acetyl-L-ornithine from L-glutamate: step 2/4. Functionally, catalyzes the ATP-dependent phosphorylation of N-acetyl-L-glutamate. The chain is Acetylglutamate kinase from Rubrobacter xylanophilus (strain DSM 9941 / JCM 11954 / NBRC 16129 / PRD-1).